Here is a 187-residue protein sequence, read N- to C-terminus: Peptide deformylase (187 aa).

Residues Cys94 and His136 each coordinate Fe cation. Glu137 is a catalytic residue. A Fe cation-binding site is contributed by His140.

Belongs to the polypeptide deformylase family. Requires Fe(2+) as cofactor.

The enzyme catalyses N-terminal N-formyl-L-methionyl-[peptide] + H2O = N-terminal L-methionyl-[peptide] + formate. In terms of biological role, removes the formyl group from the N-terminal Met of newly synthesized proteins. Requires at least a dipeptide for an efficient rate of reaction. N-terminal L-methionine is a prerequisite for activity but the enzyme has broad specificity at other positions. The chain is Peptide deformylase from Chlorobaculum parvum (strain DSM 263 / NCIMB 8327) (Chlorobium vibrioforme subsp. thiosulfatophilum).